We begin with the raw amino-acid sequence, 73 residues long: V-type proton ATPase subunit e (73 aa).

Residues 1-3 lie on the Lumenal side of the membrane; it reads MSS. A helical transmembrane segment spans residues 4–24; sequence FYTVVGVFIVVSAMSVLFWIM. Over 25-35 the chain is Cytoplasmic; it reads APKNNQAVWRS. Residues 36-56 form a helical membrane-spanning segment; it reads TVILTLAMMFLMWAITFLCQL. The Lumenal segment spans residues 57 to 73; it reads HPLVAPRRSDLRPEFAE.

Belongs to the V-ATPase e1/e2 subunit family. In terms of assembly, V-ATPase is a heteromultimeric enzyme composed of a peripheral catalytic V1 complex (components A to H) attached to an integral membrane V0 proton pore complex (components: a, c, c', c'', d, e, f and VOA1).

The protein resides in the vacuole membrane. In terms of biological role, subunit of the V0 complex of vacuolar(H+)-ATPase (V-ATPase), a multisubunit enzyme composed of a peripheral complex (V1) that hydrolyzes ATP and a membrane integral complex (V0) that translocates protons. V-ATPase is responsible for acidifying and maintaining the pH of intracellular compartments. This is V-type proton ATPase subunit e (VMA9) from Saccharomyces cerevisiae (strain ATCC 204508 / S288c) (Baker's yeast).